The following is a 499-amino-acid chain: ATP synthase subunit alpha (499 aa).

Residue 169–176 coordinates ATP; that stretch reads GDRGTGKT.

The protein belongs to the ATPase alpha/beta chains family. As to quaternary structure, F-type ATPases have 2 components, CF(1) - the catalytic core - and CF(0) - the membrane proton channel. CF(1) has five subunits: alpha(3), beta(3), gamma(1), delta(1), epsilon(1). CF(0) has three main subunits: a(1), b(2) and c(9-12). The alpha and beta chains form an alternating ring which encloses part of the gamma chain. CF(1) is attached to CF(0) by a central stalk formed by the gamma and epsilon chains, while a peripheral stalk is formed by the delta and b chains.

It is found in the cell inner membrane. The enzyme catalyses ATP + H2O + 4 H(+)(in) = ADP + phosphate + 5 H(+)(out). Produces ATP from ADP in the presence of a proton gradient across the membrane. The alpha chain is a regulatory subunit. The sequence is that of ATP synthase subunit alpha from Brachyspira hyodysenteriae (strain ATCC 49526 / WA1).